The following is a 365-amino-acid chain: 3-dehydroquinate synthase (365 aa).

NAD(+) is bound by residues 69 to 74 (DGEAHK), 103 to 107 (GVIGD), 127 to 128 (TT), Lys140, and Lys149. Positions 182, 245, and 262 each coordinate Zn(2+).

Belongs to the sugar phosphate cyclases superfamily. Dehydroquinate synthase family. Co(2+) serves as cofactor. Zn(2+) is required as a cofactor. The cofactor is NAD(+).

The protein resides in the cytoplasm. It catalyses the reaction 7-phospho-2-dehydro-3-deoxy-D-arabino-heptonate = 3-dehydroquinate + phosphate. The protein operates within metabolic intermediate biosynthesis; chorismate biosynthesis; chorismate from D-erythrose 4-phosphate and phosphoenolpyruvate: step 2/7. Functionally, catalyzes the conversion of 3-deoxy-D-arabino-heptulosonate 7-phosphate (DAHP) to dehydroquinate (DHQ). The polypeptide is 3-dehydroquinate synthase (Pseudomonas putida (strain ATCC 700007 / DSM 6899 / JCM 31910 / BCRC 17059 / LMG 24140 / F1)).